A 374-amino-acid chain; its full sequence is Probable trehalose-phosphate phosphatase 9 (374 aa).

It belongs to the trehalose phosphatase family. It depends on a divalent metal cation as a cofactor.

It carries out the reaction alpha,alpha-trehalose 6-phosphate + H2O = alpha,alpha-trehalose + phosphate. It functions in the pathway glycan biosynthesis; trehalose biosynthesis. In terms of biological role, removes the phosphate from trehalose 6-phosphate to produce free trehalose. Trehalose accumulation in plant may improve abiotic stress tolerance. This chain is Probable trehalose-phosphate phosphatase 9 (TPP9), found in Oryza sativa subsp. japonica (Rice).